The primary structure comprises 407 residues: Transmembrane protein 184B (407 aa).

Residues methionine 1 to isoleucine 24 form a disordered region. 7 helical membrane passes run phenylalanine 40 to isoleucine 60, isoleucine 84 to asparagine 104, leucine 121 to methionine 141, leucine 178 to glycine 198, valine 214 to phenylalanine 234, phenylalanine 249 to leucine 269, and valine 290 to leucine 310. The tract at residues threonine 369–asparagine 395 is disordered. A phosphoserine mark is found at serine 388, serine 402, and serine 403.

Belongs to the TMEM184 family.

The protein localises to the membrane. In terms of biological role, may activate the MAP kinase signaling pathway. This Bos taurus (Bovine) protein is Transmembrane protein 184B (TMEM184B).